Here is a 115-residue protein sequence, read N- to C-terminus: Putative membrane protein insertion efficiency factor (115 aa).

The interval 81 to 115 is disordered; the sequence is DPRPGRCGCKDAGPAVSAGSTEGNPGRRTDGTDPD. The span at 105 to 115 shows a compositional bias: basic and acidic residues; that stretch reads PGRRTDGTDPD.

Belongs to the UPF0161 family.

Its subcellular location is the cell inner membrane. Functionally, could be involved in insertion of integral membrane proteins into the membrane. This chain is Putative membrane protein insertion efficiency factor, found in Rhodospirillum rubrum (strain ATCC 11170 / ATH 1.1.1 / DSM 467 / LMG 4362 / NCIMB 8255 / S1).